A 67-amino-acid chain; its full sequence is Large ribosomal subunit protein bL32 (67 aa).

The disordered stretch occupies residues Met1–Lys44. A compositionally biased stretch (basic and acidic residues) spans Ser11–Asp20.

The protein belongs to the bacterial ribosomal protein bL32 family.

This is Large ribosomal subunit protein bL32 from Dichelobacter nodosus (strain VCS1703A).